Here is an 850-residue protein sequence, read N- to C-terminus: DNA polymerase I (850 aa).

One can recognise a 5'-3' exonuclease domain in the interval 1–288 (MKLVIFDGNS…SIIKRLGLSE (288 aa)). Residues 470 to 850 (VDRDALIQYT…KEGLNWYETK (381 aa)) are polymerase.

Belongs to the DNA polymerase type-A family.

It carries out the reaction DNA(n) + a 2'-deoxyribonucleoside 5'-triphosphate = DNA(n+1) + diphosphate. Functionally, in addition to polymerase activity, this DNA polymerase exhibits 3'-5' and 5'-3' exonuclease activity. In Caldicellulosiruptor bescii (strain ATCC BAA-1888 / DSM 6725 / KCTC 15123 / Z-1320) (Anaerocellum thermophilum), this protein is DNA polymerase I (polA).